The primary structure comprises 149 residues: D-aminoacyl-tRNA deacylase (149 aa).

The Gly-cisPro motif, important for rejection of L-amino acids motif lies at 137–138 (GP).

Belongs to the DTD family. Homodimer.

It localises to the cytoplasm. The catalysed reaction is glycyl-tRNA(Ala) + H2O = tRNA(Ala) + glycine + H(+). It carries out the reaction a D-aminoacyl-tRNA + H2O = a tRNA + a D-alpha-amino acid + H(+). In terms of biological role, an aminoacyl-tRNA editing enzyme that deacylates mischarged D-aminoacyl-tRNAs. Also deacylates mischarged glycyl-tRNA(Ala), protecting cells against glycine mischarging by AlaRS. Acts via tRNA-based rather than protein-based catalysis; rejects L-amino acids rather than detecting D-amino acids in the active site. By recycling D-aminoacyl-tRNA to D-amino acids and free tRNA molecules, this enzyme counteracts the toxicity associated with the formation of D-aminoacyl-tRNA entities in vivo and helps enforce protein L-homochirality. This is D-aminoacyl-tRNA deacylase from Clostridium botulinum (strain Eklund 17B / Type B).